A 365-amino-acid chain; its full sequence is Methionine import ATP-binding protein MetN (365 aa).

An ABC transporter domain is found at 26–261; it reads VRLVDLKRRF…PQSDITKSLL (236 aa). ATP is bound at residue 58–65; sequence GRSGAGKS.

It belongs to the ABC transporter superfamily. Methionine importer (TC 3.A.1.24) family. In terms of assembly, the complex is composed of two ATP-binding proteins (MetN), two transmembrane proteins (MetI) and a solute-binding protein (MetQ).

The protein resides in the cell inner membrane. It catalyses the reaction L-methionine(out) + ATP + H2O = L-methionine(in) + ADP + phosphate + H(+). The enzyme catalyses D-methionine(out) + ATP + H2O = D-methionine(in) + ADP + phosphate + H(+). Functionally, part of the ABC transporter complex MetNIQ involved in methionine import. Responsible for energy coupling to the transport system. The chain is Methionine import ATP-binding protein MetN from Mesorhizobium japonicum (strain LMG 29417 / CECT 9101 / MAFF 303099) (Mesorhizobium loti (strain MAFF 303099)).